The sequence spans 295 residues: Glutamyl-Q tRNA(Asp) synthetase (295 aa).

L-glutamate is bound by residues R9–T13 and E45. The short motif at P12–S22 is the 'HIGH' region element. Zn(2+) is bound by residues C101, C103, Y115, and C119. L-glutamate contacts are provided by Y172 and R190. Residues K228–S232 carry the 'KMSKS' region motif. K231 lines the ATP pocket.

The protein belongs to the class-I aminoacyl-tRNA synthetase family. GluQ subfamily. Zn(2+) serves as cofactor.

Functionally, catalyzes the tRNA-independent activation of glutamate in presence of ATP and the subsequent transfer of glutamate onto a tRNA(Asp). Glutamate is transferred on the 2-amino-5-(4,5-dihydroxy-2-cyclopenten-1-yl) moiety of the queuosine in the wobble position of the QUC anticodon. The protein is Glutamyl-Q tRNA(Asp) synthetase of Pseudomonas syringae pv. tomato (strain ATCC BAA-871 / DC3000).